Reading from the N-terminus, the 97-residue chain is Large ribosomal subunit protein bL27 (97 aa).

A propeptide spanning residues 1–12 (MLKMNLANLQLF) is cleaved from the precursor. The tract at residues 14–37 (HKKGGGSTSNGRDSQAKRLGAKAA) is disordered.

Belongs to the bacterial ribosomal protein bL27 family. The N-terminus is cleaved by ribosomal processing cysteine protease Prp.

This chain is Large ribosomal subunit protein bL27, found in Streptococcus agalactiae serotype III (strain NEM316).